We begin with the raw amino-acid sequence, 209 residues long: Glycerol-3-phosphate acyltransferase (209 aa).

A run of 5 helical transmembrane segments spans residues isoleucine 7–valine 27, alanine 85–phenylalanine 105, valine 117–alanine 137, isoleucine 142–alanine 162, and methionine 166–histidine 183.

This sequence belongs to the PlsY family. As to quaternary structure, probably interacts with PlsX.

The protein resides in the cell inner membrane. It catalyses the reaction an acyl phosphate + sn-glycerol 3-phosphate = a 1-acyl-sn-glycero-3-phosphate + phosphate. It participates in lipid metabolism; phospholipid metabolism. Catalyzes the transfer of an acyl group from acyl-phosphate (acyl-PO(4)) to glycerol-3-phosphate (G3P) to form lysophosphatidic acid (LPA). This enzyme utilizes acyl-phosphate as fatty acyl donor, but not acyl-CoA or acyl-ACP. This is Glycerol-3-phosphate acyltransferase from Hydrogenovibrio crunogenus (strain DSM 25203 / XCL-2) (Thiomicrospira crunogena).